A 313-amino-acid polypeptide reads, in one-letter code: Formimidoylglutamase (313 aa).

Mn(2+) is bound by residues His130, Asp155, His157, Asp159, Asp241, and Asp243.

This sequence belongs to the arginase family. Requires Mn(2+) as cofactor.

It carries out the reaction N-formimidoyl-L-glutamate + H2O = formamide + L-glutamate. Its pathway is amino-acid degradation; L-histidine degradation into L-glutamate; L-glutamate from N-formimidoyl-L-glutamate (hydrolase route): step 1/1. Its function is as follows. Catalyzes the conversion of N-formimidoyl-L-glutamate to L-glutamate and formamide. The chain is Formimidoylglutamase from Salmonella paratyphi A (strain ATCC 9150 / SARB42).